The following is a 63-amino-acid chain: Hirudin-P6 (63 aa).

The segment at 1-3 (MRY) is interaction with thrombin active site. 3 disulfides stabilise this stretch: C6–C14, C16–C28, and C22–C37. The span at 35–55 (KKCVEGEGTRKPQNEGQHDFD) shows a compositional bias: basic and acidic residues. Positions 35–63 (KKCVEGEGTRKPQNEGQHDFDPIPEEYLS) are disordered. An O-linked (GalNAc...) threonine glycan is attached at T43. The interval 53 to 63 (DFDPIPEEYLS) is interaction with fibrinogen-binding exosite of thrombin. A Sulfotyrosine modification is found at Y61.

Belongs to the protease inhibitor I14 (hirudin) family. Post-translationally, O-linked glycan consists of Fuc-Gal-GalNAc trisaccharide.

It localises to the secreted. In terms of biological role, hirudin is a potent thrombin-specific protease inhibitor. It forms a stable non-covalent complex with alpha-thrombin, thereby abolishing its ability to cleave fibrinogen. This Hirudinaria manillensis (Asian medical leech) protein is Hirudin-P6.